Consider the following 129-residue polypeptide: Probable tautomerase YrdN (129 aa).

Proline 2 functions as the Proton acceptor; via imino nitrogen in the catalytic mechanism.

It belongs to the 4-oxalocrotonate tautomerase family.

Its function is as follows. Putative target of GltR. This chain is Probable tautomerase YrdN (yrdN), found in Bacillus subtilis (strain 168).